The sequence spans 141 residues: Large ribosomal subunit protein uL11 (141 aa).

It belongs to the universal ribosomal protein uL11 family. In terms of assembly, part of the ribosomal stalk of the 50S ribosomal subunit. Interacts with L10 and the large rRNA to form the base of the stalk. L10 forms an elongated spine to which L12 dimers bind in a sequential fashion forming a multimeric L10(L12)X complex. Post-translationally, one or more lysine residues are methylated.

Functionally, forms part of the ribosomal stalk which helps the ribosome interact with GTP-bound translation factors. The polypeptide is Large ribosomal subunit protein uL11 (Chlamydia felis (strain Fe/C-56) (Chlamydophila felis)).